The chain runs to 948 residues: ATPase 8, plasma membrane-type (948 aa).

At 1–64 (MATEFSWDEI…EKSENKFLKF (64 aa)) the chain is on the cytoplasmic side. A helical membrane pass occupies residues 65 to 84 (LGFMWNPLSWVMESAAIMAI). Over 85–96 (VLANGGGKAPDW) the chain is Extracellular. Residues 97–117 (QDFIGIMVLLIINSTISFIEE) form a helical membrane-spanning segment. Residues 118–246 (NNAGNAAAAL…GHFQKVLTSI (129 aa)) are Cytoplasmic-facing. A helical transmembrane segment spans residues 247–267 (GNFCICSIGLGMLIEILIMYP). The Extracellular segment spans residues 268 to 276 (IQHRTYRDG). Residues 277–294 (IDNLLVLLIGGIPIAMPT) form a helical membrane-spanning segment. The Cytoplasmic portion of the chain corresponds to 295–646 (VLSVTMAIGS…TSRAIFQRMK (352 aa)). Residue Asp-332 is the 4-aspartylphosphate intermediate of the active site. Positions 591 and 595 each coordinate Mg(2+). The chain crosses the membrane as a helical span at residues 647–668 (NYTIYAVSITIRIVLGFMLVAL). Over 669–673 (IWRFD) the chain is Extracellular. The chain crosses the membrane as a helical span at residues 674–696 (FAPFMVLIIAILNDGTIMTISKD). Over 697–712 (RVKPSPVPDSWKLNEI) the chain is Cytoplasmic. The helical transmembrane segment at 713-733 (FATGVVLGTYMALTTVLFFWL) threads the bilayer. The Extracellular segment spans residues 734–754 (AHDTDFFSKTFGVRSIQGNEE). A helical membrane pass occupies residues 755–775 (ELMAALYLQVSIISQALIFVT). Residues 776-787 (RSRSWSFVERPG) are Cytoplasmic-facing. The chain crosses the membrane as a helical span at residues 788–808 (FLLLIAFVIAQLVATLIAVYA). Over 809 to 816 (NWGFARIV) the chain is Extracellular. Residues 817 to 837 (GCGWGWAGGIWVYSIITYIPL) form a helical membrane-spanning segment. Residues 838–948 (DILKFIIRYA…IDTIQQHYTV (111 aa)) lie on the Cytoplasmic side of the membrane. Residue Thr-884 is modified to Phosphothreonine. Ser-930 carries the phosphoserine modification. Residues 946-948 (YTV) form an interaction with 14-3-3 proteins region. The residue at position 947 (Thr-947) is a Phosphothreonine.

This sequence belongs to the cation transport ATPase (P-type) (TC 3.A.3) family. Type IIIA subfamily. Binds to 14-3-3 proteins. The binding is induced by phosphorylation of Thr-947. Binding to 14-3-3 proteins activates the H(+)-ATPase. As to expression, expressed in guard cells, roots and leaves, and barely in mesophyll cells.

It is found in the membrane. The enzyme catalyses ATP + H2O + H(+)(in) = ADP + phosphate + 2 H(+)(out). Its function is as follows. The plasma membrane H(+) ATPase of plants and fungi generates a proton gradient that drives the active transport of nutrients by H(+)-symport. The resulting external acidification and/or internal alkinization may mediate growth responses. In Arabidopsis thaliana (Mouse-ear cress), this protein is ATPase 8, plasma membrane-type (AHA8).